The sequence spans 158 residues: Protein Smg homolog (158 aa).

The protein belongs to the Smg family.

The polypeptide is Protein Smg homolog (Herminiimonas arsenicoxydans).